The chain runs to 187 residues: Probable DNA-directed RNA polymerase subunit delta (187 aa).

In terms of domain architecture, HTH HARE-type spans 14 to 81 (LSMIEVAHAL…GNNVWALRSW (68 aa)). Positions 96-187 (EIEDEEEEKP…EDDSDDTDED (92 aa)) are disordered. Composition is skewed to acidic residues over residues 117-149 (IEDE…EDKD) and 157-187 (ELAE…TDED).

The protein belongs to the RpoE family. RNAP is composed of a core of 2 alpha, a beta and a beta' subunits. The core is associated with a delta subunit and one of several sigma factors.

Functionally, participates in both the initiation and recycling phases of transcription. In the presence of the delta subunit, RNAP displays an increased specificity of transcription, a decreased affinity for nucleic acids, and an increased efficiency of RNA synthesis because of enhanced recycling. This chain is Probable DNA-directed RNA polymerase subunit delta, found in Lactococcus lactis subsp. cremoris (strain SK11).